A 489-amino-acid chain; its full sequence is Rhamnulokinase (489 aa).

Position 13-17 (13-17 (ASSGR)) interacts with ATP. A disulfide bond links Cys68 and Cys222. Substrate is bound by residues Gly83 and 236–238 (HDT). Asp237 serves as the catalytic Proton acceptor. Residue Thr259 coordinates ATP. Asn296 is a substrate binding site. Gln304 contacts ATP. Cys353 and Cys370 are disulfide-bonded. Gly402 is an ATP binding site. Cys413 and Cys417 are joined by a disulfide.

It belongs to the rhamnulokinase family. As to quaternary structure, monomer. Mg(2+) serves as cofactor.

It carries out the reaction L-rhamnulose + ATP = L-rhamnulose 1-phosphate + ADP + H(+). Its pathway is carbohydrate degradation; L-rhamnose degradation; glycerone phosphate from L-rhamnose: step 2/3. In terms of biological role, involved in the catabolism of L-rhamnose (6-deoxy-L-mannose). Catalyzes the transfer of the gamma-phosphate group from ATP to the 1-hydroxyl group of L-rhamnulose to yield L-rhamnulose 1-phosphate. The sequence is that of Rhamnulokinase from Escherichia coli O7:K1 (strain IAI39 / ExPEC).